The chain runs to 162 residues: Ribosome maturation factor RimP (162 aa).

The protein belongs to the RimP family.

It is found in the cytoplasm. Required for maturation of 30S ribosomal subunits. This chain is Ribosome maturation factor RimP, found in Ralstonia pickettii (strain 12J).